The primary structure comprises 362 residues: Methionine import ATP-binding protein MetN (362 aa).

The region spanning 2–241 (IHIENLSKTY…PRHEVTRAMV (240 aa)) is the ABC transporter domain. 38 to 45 (GPSGAGKS) contributes to the ATP binding site.

Belongs to the ABC transporter superfamily. Methionine importer (TC 3.A.1.24) family. As to quaternary structure, the complex is composed of two ATP-binding proteins (MetN), two transmembrane proteins (MetI) and a solute-binding protein (MetQ).

Its subcellular location is the cell inner membrane. It catalyses the reaction L-methionine(out) + ATP + H2O = L-methionine(in) + ADP + phosphate + H(+). It carries out the reaction D-methionine(out) + ATP + H2O = D-methionine(in) + ADP + phosphate + H(+). Part of the ABC transporter complex MetNIQ involved in methionine import. Responsible for energy coupling to the transport system. The sequence is that of Methionine import ATP-binding protein MetN from Bordetella bronchiseptica (strain ATCC BAA-588 / NCTC 13252 / RB50) (Alcaligenes bronchisepticus).